A 238-amino-acid polypeptide reads, in one-letter code: MTTTTTTDDTQKLDPSASDEVIYKSWDLLIYEIWVLGIVSTWAWGCSTTEYLLPQFRANVGTNHLDVGSGTGYYLRKGGIPASTRLTLLDLERPALDLGLQRCGRSDARGLQADILQPLPVIDKFDSVSMYYLLHCIPASVEDKCAIFKHIKHNMTPDGVIHGANVLGKGVRNDGHFAAYVRRGVLKAGIFHNLDDNAYDFEHALRMNFEEVETRVVGSVFIFRASRPKLDEGDLLET.

This sequence belongs to the methyltransferase superfamily.

It functions in the pathway secondary metabolite biosynthesis; terpenoid biosynthesis. N-methyltransferase; part of the gene cluster that mediates the biosynthesis of viridicatumtoxin, a tetracycline-like fungal meroterpenoid with a unique, fused spirobicyclic ring system. The first step of the pathway is the production of the malonamoyl-CoA starter unit for the polyketide synthase vrtA. The aldolase vrtJ may be involved in the synthesis of the malonamate substrate for malonamoyl-CoA synthetase vrtB. The polyketide synthase vrtA then may utilize the malonamoyl-CoA starter unit, followed by sequential condensation of eight malonyl-CoA units to form the polyketide backbone. The cyclization of the last ring could be mediated by the lactamase-like protein vrtG. The proposed post-PKS tailoring steps are a hydroxylation at C5 catalyzed the cytochrome P450 monooxygenase vrtE, a hydroxylation at C12a catalyzed by VrtH and/or VrtI, and an O-methylation by the O-methyltransferase vrtF. VrtC is then proposed to catalyze the transfer of a geranyl group synthesized by vrtD to the aromatic C ring of the tetracyclic polyketide intermediate of viridicatumtoxin to yield previridicatumtoxin. Finally, the cytochrome P450 monooxygenase vrtK catalyzes the spirocyclization of the geranyl moiety of previridicatumtoxin to afford viridicatumtoxin. The protein is N-methyltransferase vrtF of Penicillium aethiopicum.